A 438-amino-acid polypeptide reads, in one-letter code: tRNA-2-methylthio-N(6)-dimethylallyladenosine synthase (438 aa).

In terms of domain architecture, MTTase N-terminal spans 4 to 120; it reads KKLYIDTVGC…VPEMVKDAEA (117 aa). [4Fe-4S] cluster-binding residues include cysteine 13, cysteine 49, cysteine 83, cysteine 158, cysteine 162, and cysteine 165. The region spanning 144-377 is the Radical SAM core domain; that stretch reads GRKRVSAFVT…QAVHSRIHNE (234 aa). The 62-residue stretch at 377 to 438 folds into the TRAM domain; it reads ETYVGSTQQV…YANSLLGELL (62 aa).

The protein belongs to the methylthiotransferase family. MiaB subfamily. Monomer. Requires [4Fe-4S] cluster as cofactor.

Its subcellular location is the cytoplasm. The enzyme catalyses N(6)-dimethylallyladenosine(37) in tRNA + (sulfur carrier)-SH + AH2 + 2 S-adenosyl-L-methionine = 2-methylsulfanyl-N(6)-dimethylallyladenosine(37) in tRNA + (sulfur carrier)-H + 5'-deoxyadenosine + L-methionine + A + S-adenosyl-L-homocysteine + 2 H(+). Its function is as follows. Catalyzes the methylthiolation of N6-(dimethylallyl)adenosine (i(6)A), leading to the formation of 2-methylthio-N6-(dimethylallyl)adenosine (ms(2)i(6)A) at position 37 in tRNAs that read codons beginning with uridine. The polypeptide is tRNA-2-methylthio-N(6)-dimethylallyladenosine synthase (Trichlorobacter lovleyi (strain ATCC BAA-1151 / DSM 17278 / SZ) (Geobacter lovleyi)).